The primary structure comprises 431 residues: Adenylosuccinate synthetase (431 aa).

Residues 13-19 (GDEGKGK) and 41-43 (GHT) each bind GTP. The Proton acceptor role is filled by Asp-14. 2 residues coordinate Mg(2+): Asp-14 and Gly-41. Residues 14–17 (DEGK), 39–42 (NAGH), Thr-130, Arg-144, Gln-225, Thr-240, and Arg-304 contribute to the IMP site. The Proton donor role is filled by His-42. 300-306 (SVTGRPR) serves as a coordination point for substrate. GTP contacts are provided by residues Arg-306, 332–334 (KLD), and 414–416 (STG).

This sequence belongs to the adenylosuccinate synthetase family. In terms of assembly, homodimer. Mg(2+) is required as a cofactor.

The protein localises to the cytoplasm. It carries out the reaction IMP + L-aspartate + GTP = N(6)-(1,2-dicarboxyethyl)-AMP + GDP + phosphate + 2 H(+). It functions in the pathway purine metabolism; AMP biosynthesis via de novo pathway; AMP from IMP: step 1/2. In terms of biological role, plays an important role in the de novo pathway of purine nucleotide biosynthesis. Catalyzes the first committed step in the biosynthesis of AMP from IMP. This chain is Adenylosuccinate synthetase, found in Bordetella avium (strain 197N).